A 314-amino-acid polypeptide reads, in one-letter code: Hydroxyacyl-coenzyme A dehydrogenase, mitochondrial (314 aa).

The transit peptide at M1 to V12 directs the protein to the mitochondrion. NAD(+)-binding positions include G34–G39 and D57. The CoA site is built by S73 and K80. Residue K80 is modified to N6-succinyllysine. Residues K81 and K87 each carry the N6-acetyllysine; alternate modification. N6-succinyllysine; alternate occurs at positions 81 and 87. E122 provides a ligand contact to NAD(+). Residue K125 is modified to N6-acetyllysine. K127 lines the NAD(+) pocket. An N6-(2-hydroxyisobutyryl)lysine modification is found at K127. K136 is modified (N6-acetyllysine; alternate). Residue K136 is modified to N6-succinyllysine; alternate. Positions 149 and 173 each coordinate NAD(+). Residue S149 coordinates CoA. The residue at position 179 (K179) is an N6-acetyllysine. N6-acetyllysine; alternate is present on residues K185, K192, and K202. 3 positions are modified to N6-succinyllysine; alternate: K185, K192, and K202. N6-succinyllysine is present on K206. 2 positions are modified to N6-acetyllysine; alternate: K212 and K241. N6-succinyllysine; alternate occurs at positions 212 and 241. K305 contributes to the NAD(+) binding site. Residue K312 is modified to N6-acetyllysine; alternate. K312 bears the N6-succinyllysine; alternate mark.

Belongs to the 3-hydroxyacyl-CoA dehydrogenase family. Homodimer. Interacts with GLUD1; this interaction inhibits the activation of glutamate dehydrogenase 1 (GLUD1). Post-translationally, succinylation at Lys-81, adjacent to a coenzyme A binding site. Desuccinylated by SIRT5. Expressed in liver, kidney, pancreas, heart and skeletal muscle.

The protein localises to the mitochondrion matrix. It catalyses the reaction a (3S)-3-hydroxyacyl-CoA + NAD(+) = a 3-oxoacyl-CoA + NADH + H(+). The catalysed reaction is (3S)-3-hydroxybutanoyl-CoA + NAD(+) = acetoacetyl-CoA + NADH + H(+). It carries out the reaction (3S)-hydroxydecanoyl-CoA + NAD(+) = 3-oxodecanoyl-CoA + NADH + H(+). The enzyme catalyses (3S)-hydroxyhexadecanoyl-CoA + NAD(+) = 3-oxohexadecanoyl-CoA + NADH + H(+). It functions in the pathway lipid metabolism; fatty acid beta-oxidation. Its function is as follows. Mitochondrial fatty acid beta-oxidation enzyme that catalyzes the third step of the beta-oxidation cycle for medium and short-chain 3-hydroxy fatty acyl-CoAs (C4 to C10). Plays a role in the control of insulin secretion by inhibiting the activation of glutamate dehydrogenase 1 (GLUD1), an enzyme that has an important role in regulating amino acid-induced insulin secretion. Plays a role in the maintenance of normal spermatogenesis through the reduction of fatty acid accumulation in the testes. This is Hydroxyacyl-coenzyme A dehydrogenase, mitochondrial (HADH) from Homo sapiens (Human).